The primary structure comprises 142 residues: Hemoglobin subunit alpha 1 (142 aa).

At serine 1 the chain carries N-acetylserine. The 142-residue stretch at 1-142 (SLSDKDKAAV…VSLALSERYR (142 aa)) folds into the Globin domain. Histidine 59 contacts O2. Histidine 88 contacts heme b.

Belongs to the globin family. As to quaternary structure, hb1 is a heterotetramer of two alpha-1 chains and two beta-1 chains. Hb2 is a heterotetramer of two alpha-2 chains and two beta-1 chains. HbC is a heterotetramer of two alpha-1 chains and two beta-2 chains. Red blood cells.

Its function is as follows. Involved in oxygen transport from gills to the various peripheral tissues. This chain is Hemoglobin subunit alpha 1, found in Eleginops maclovinus (Patagonian blennie).